We begin with the raw amino-acid sequence, 312 residues long: Phospholipid phosphatase 3 (312 aa).

At 1–33 (MQSYKYDKAIVPESKNGGSPALNNNPRKGGSKR) the chain is on the cytoplasmic side. S19 bears the Phosphoserine mark. A helical membrane pass occupies residues 34-54 (VLLICLDLFCLFMAALPFLII). The Extracellular segment spans residues 55–85 (ETSTIKPYRRGFYCNDESIKYPLKVSETIND). Residues 86–106 (AVLCAVGIVIAILRIITGEFY) traverse the membrane as a helical segment. The Cytoplasmic segment spans residues 107–123 (RIYYLKEKSRSTIQNPY). The short motif at 109–110 (YY) is the Dityrosine basolateral targeting motif element. Residues 124 to 144 (VAALYKQVGCFLFGCAISQSF) traverse the membrane as a helical segment. At 145–194 (TDIAKVSIGRLRPHFLSVCDPDFSQINCSEGYIQNYRCRGEDSKVQEARK) the chain is on the extracellular side. Positions 149–157 (KVSIGRLRP) are phosphatase sequence motif I. An N-linked (GlcNAc...) asparagine glycan is attached at N171. Residues 183–185 (RGE) carry the Integrin-binding motif motif. The chain crosses the membrane as a helical span at residues 195–215 (SFFSGHASFSMFTMLYLVLYL). The tract at residues 197 to 200 (FSGH) is phosphatase sequence motif II. The active-site Proton donors is the H200. At 216–226 (QARFTWRGARL) the chain is on the cytoplasmic side. A helical membrane pass occupies residues 227–244 (LRPLLQFTLLMMAFYTGL). The phosphatase sequence motif III stretch occupies residues 245-256 (SRVSDYKHHPSD). Over 245 to 258 (SRVSDYKHHPSDVL) the chain is Extracellular. Residue H252 is the Nucleophile of the active site. A helical transmembrane segment spans residues 259-279 (AGFAQGALVACCIVFFVSDLF). The tract at residues 276–312 (SDLFKTKTTLSLPAPAIRREILSPVDIMDRSNHHNMV) is mediates interaction with CTNND1. The Cytoplasmic segment spans residues 280-312 (KTKTTLSLPAPAIRREILSPVDIMDRSNHHNMV).

It belongs to the PA-phosphatase related phosphoesterase family. In terms of assembly, forms functional homodimers and homooligomers that are not required for substrate recognition and catalytic activity. Can also form heterooligomers with other PLPP2 and PLPP3. Interacts with CTNND1; negatively regulates the PLPP3-mediated stabilization of beta-catenin/CTNNB1. Post-translationally, N-glycosylated. Contains high-mannose oligosaccharides. Detected in epithelial cells of intestinal mucosa, lung, liver and brain.

Its subcellular location is the cell membrane. It localises to the basolateral cell membrane. The protein resides in the endoplasmic reticulum membrane. It is found in the endoplasmic reticulum-Golgi intermediate compartment membrane. The protein localises to the golgi apparatus membrane. Its subcellular location is the golgi apparatus. It localises to the trans-Golgi network membrane. The protein resides in the membrane raft. The catalysed reaction is a 1,2-diacyl-sn-glycero-3-phosphate + H2O = a 1,2-diacyl-sn-glycerol + phosphate. It catalyses the reaction 1,2-dihexadecanoyl-sn-glycero-3-phosphate + H2O = 1,2-dihexadecanoyl-sn-glycerol + phosphate. It carries out the reaction 1,2-di-(9Z-octadecenoyl)-sn-glycero-3-phosphate + H2O = 1,2-di-(9Z-octadecenoyl)-sn-glycerol + phosphate. The enzyme catalyses a monoacyl-sn-glycero-3-phosphate + H2O = a monoacylglycerol + phosphate. The catalysed reaction is (9Z)-octadecenoyl-sn-glycero-3-phosphate + H2O = (9Z-octadecenoyl)-glycerol + phosphate. It catalyses the reaction sphing-4-enine 1-phosphate + H2O = sphing-4-enine + phosphate. It carries out the reaction an N-acylsphing-4-enine 1-phosphate + H2O = an N-acylsphing-4-enine + phosphate. The enzyme catalyses N-(octanoyl)-sphing-4-enine-1-phosphate + H2O = N-octanoylsphing-4-enine + phosphate. The catalysed reaction is N-(9Z-octadecenoyl)-ethanolamine phosphate + H2O = N-(9Z-octadecenoyl) ethanolamine + phosphate. It participates in lipid metabolism; phospholipid metabolism. With respect to regulation, magnesium-independent phospholipid phosphatase. Insensitive to N-ethylmaleimide. Inhibited by sphingosine, zinc ions and modestly by propanolol. Functionally, magnesium-independent phospholipid phosphatase of the plasma membrane that catalyzes the dephosphorylation of a variety of glycerolipid and sphingolipid phosphate esters including phosphatidate/PA, lysophosphatidate/LPA, diacylglycerol pyrophosphate/DGPP, sphingosine 1-phosphate/S1P and ceramide 1-phosphate/C1P. Also acts on N-oleoyl ethanolamine phosphate/N-(9Z-octadecenoyl)-ethanolamine phosphate, a potential physiological compound. Has both an extracellular and an intracellular phosphatase activity, allowing the hydrolysis and the cellular uptake of these bioactive lipid mediators from the milieu, regulating signal transduction in different cellular processes. Through the dephosphorylation of extracellular sphingosine-1-phosphate and the regulation of its extra- and intracellular availability, plays a role in vascular homeostasis, regulating endothelial cell migration, adhesion, survival, proliferation and the production of pro-inflammatory cytokines. By maintaining the appropriate levels of this lipid in the cerebellum, also ensure its proper development and function. Through its intracellular lipid phosphatase activity may act in early compartments of the secretory pathway, regulating the formation of Golgi to endoplasmic reticulum retrograde transport carriers. In terms of biological role, independently of this phosphatase activity may also function in the Wnt signaling pathway and the stabilization of beta-catenin/CTNNB1, thereby regulating cell proliferation, migration and differentiation in angiogenesis or yet in tumor growth. Also plays a role in integrin-mediated cell-cell adhesion in angiogenesis. The chain is Phospholipid phosphatase 3 from Rattus norvegicus (Rat).